The sequence spans 188 residues: ATP-dependent protease subunit HslV (188 aa).

T8 is a catalytic residue. Na(+) is bound by residues A165, C168, and T171.

The protein belongs to the peptidase T1B family. HslV subfamily. A double ring-shaped homohexamer of HslV is capped on each side by a ring-shaped HslU homohexamer. The assembly of the HslU/HslV complex is dependent on binding of ATP.

It localises to the cytoplasm. The catalysed reaction is ATP-dependent cleavage of peptide bonds with broad specificity.. Its activity is regulated as follows. Allosterically activated by HslU binding. In terms of biological role, protease subunit of a proteasome-like degradation complex believed to be a general protein degrading machinery. In Neorickettsia sennetsu (strain ATCC VR-367 / Miyayama) (Ehrlichia sennetsu), this protein is ATP-dependent protease subunit HslV.